A 479-amino-acid chain; its full sequence is Integrin-linked protein kinase 1 (479 aa).

2 positions are modified to phosphoserine: S17 and S26. Residues 29-73 are disordered; it reads FTRQSSLDPRRTNMRFSFGRQSSLDPIRRSPDSSKSDDEPHMSVP. The span at 54–69 shows a compositional bias: basic and acidic residues; that stretch reads PIRRSPDSSKSDDEPH. 2 ANK repeats span residues 77–106 and 110–139; these read DSTM…DVNS and DGRT…NIDA. Positions 194–461 constitute a Protein kinase domain; sequence LEVQVRKSDG…EIIIRLDKIV (268 aa). ATP is bound by residues 200 to 208 and K222; that span reads KSDGISKGA. D319 serves as the catalytic Proton acceptor.

Belongs to the protein kinase superfamily. Ser/Thr protein kinase family. As to quaternary structure, interacts with CML9 and POT5/HAK5. Autophosphorylated at Ser-17 and Ser-26.

It is found in the cell membrane. Its subcellular location is the endoplasmic reticulum membrane. The catalysed reaction is L-seryl-[protein] + ATP = O-phospho-L-seryl-[protein] + ADP + H(+). It catalyses the reaction L-threonyl-[protein] + ATP = O-phospho-L-threonyl-[protein] + ADP + H(+). Kinase activity is suppressed by interaction with CML9. Functionally, functions as a link between plant defense pathways, stress responses and potassium homeostasis. Promotes osmotic stress sensitivity, responses to the bacterial-derived pathogen-associated molecular pattern (PAMP) flg22, and resistance to bacterial pathogens. Promotes the accumulation of POT5/HAK5, a potassium transporter that mediates high-affinity uptake during potassium deficiency. The polypeptide is Integrin-linked protein kinase 1 (Arabidopsis thaliana (Mouse-ear cress)).